We begin with the raw amino-acid sequence, 518 residues long: Delta(14)-sterol reductase erg24B (518 aa).

N36 is a glycosylation site (N-linked (GlcNAc...) asparagine). 6 helical membrane-spanning segments follow: residues 110-130 (VTMW…FLPG), 150-170 (AFLS…LYGT), 182-202 (YVQV…FVYL), 294-314 (IVLT…MEPA), 321-341 (VIMD…VPFL), and 355-375 (ELGL…YVIF). NADP(+)-binding positions include K382, R386, L409, W414, and 421–422 (NY). The chain crosses the membrane as a helical span at residues 464-484 (SRGWGMIFTYFYMIYFGVLLL). NADP(+)-binding positions include D490, 494 to 498 (CKRKY), and Y505.

This sequence belongs to the ERG4/ERG24 family.

It localises to the endoplasmic reticulum membrane. The protein operates within steroid metabolism; ergosterol biosynthesis. Delta(14)-sterol reductase; part of the third module of ergosterol biosynthesis pathway that includes the late steps of the pathway. Catalyzes the reduction of the C14=C15 double bond within 4,4,24-trimethyl ergosta-8,14,24(28)-trienolto produce 4,4-dimethylfecosterol. The third module or late pathway involves the ergosterol synthesis itself through consecutive reactions that mainly occur in the endoplasmic reticulum (ER) membrane. Firstly, the squalene synthase erg9 catalyzes the condensation of 2 farnesyl pyrophosphate moieties to form squalene, which is the precursor of all steroids. Squalene synthase is crucial for balancing the incorporation of farnesyl diphosphate (FPP) into sterol and nonsterol isoprene synthesis. Secondly, squalene is converted into lanosterol by the consecutive action of the squalene epoxidase erg1 and the lanosterol synthase erg7. Then, the delta(24)-sterol C-methyltransferase erg6 methylates lanosterol at C-24 to produce eburicol. Eburicol is the substrate of the sterol 14-alpha demethylase encoded by cyp51A and cyp51B, to yield 4,4,24-trimethyl ergosta-8,14,24(28)-trienol. The C-14 reductase erg24 then reduces the C14=C15 double bond which leads to 4,4-dimethylfecosterol. A sequence of further demethylations at C-4, involving the C-4 demethylation complex containing the C-4 methylsterol oxidases erg25A or erg25B, the sterol-4-alpha-carboxylate 3-dehydrogenase erg26 and the 3-keto-steroid reductase erg27, leads to the production of fecosterol via 4-methylfecosterol. The C-8 sterol isomerase erg2 then catalyzes the reaction which results in unsaturation at C-7 in the B ring of sterols and thus converts fecosterol to episterol. The sterol-C5-desaturase erg3B then catalyzes the introduction of a C-5 double bond in the B ring to produce 5-dehydroepisterol. The 2 other sterol-C5-desaturases, erg3A and erg3C, seem to be less important in ergosterol biosynthesis. The C-22 sterol desaturase erg5 further converts 5-dehydroepisterol into ergosta-5,7,22,24(28)-tetraen-3beta-ol by forming the C-22(23) double bond in the sterol side chain. Finally, ergosta-5,7,22,24(28)-tetraen-3beta-ol is substrate of the C-24(28) sterol reductases erg4A and erg4B to produce ergosterol. Possible alternative sterol biosynthetic pathways might exist from fecosterol to ergosterol, depending on the activities of the erg3 isoforms. The polypeptide is Delta(14)-sterol reductase erg24B (Aspergillus fumigatus (strain ATCC MYA-4609 / CBS 101355 / FGSC A1100 / Af293) (Neosartorya fumigata)).